The following is a 207-amino-acid chain: Transcription factor bHLH149 (207 aa).

Residues 1–25 are disordered; the sequence is MVESLFPSIENTGESSRRKKPRISE. Residues 132–181 enclose the bHLH domain; it reads KSRKGLTETNRIKLPAVERKLKILGRLVPGCRKVSVPNLLDEATDYIAAL.

As to quaternary structure, homodimer. Interacts with PRE3.

The protein localises to the nucleus. Its function is as follows. Atypical bHLH transcription factor probably unable to bind DNA. Negatively regulates brassinosteroid signaling. In Arabidopsis thaliana (Mouse-ear cress), this protein is Transcription factor bHLH149 (BHLH149).